Reading from the N-terminus, the 114-residue chain is Ribonuclease P protein component (114 aa).

This sequence belongs to the RnpA family. In terms of assembly, consists of a catalytic RNA component (M1 or rnpB) and a protein subunit.

It catalyses the reaction Endonucleolytic cleavage of RNA, removing 5'-extranucleotides from tRNA precursor.. In terms of biological role, RNaseP catalyzes the removal of the 5'-leader sequence from pre-tRNA to produce the mature 5'-terminus. It can also cleave other RNA substrates such as 4.5S RNA. The protein component plays an auxiliary but essential role in vivo by binding to the 5'-leader sequence and broadening the substrate specificity of the ribozyme. This chain is Ribonuclease P protein component, found in Legionella pneumophila (strain Paris).